A 248-amino-acid polypeptide reads, in one-letter code: Probable transcriptional regulatory protein BOV_1660 (248 aa).

It belongs to the TACO1 family.

Its subcellular location is the cytoplasm. The sequence is that of Probable transcriptional regulatory protein BOV_1660 from Brucella ovis (strain ATCC 25840 / 63/290 / NCTC 10512).